Consider the following 64-residue polypeptide: Prokaryotic ubiquitin-like protein UBact (64 aa).

2 stretches are compositionally biased toward basic and acidic residues: residues 1 to 12 and 33 to 64; these read MSDLFRMEERRQ and PDVKRPDTSDLLRRMKRVDPDAARRYRQRSGE. Positions 1 to 64 are disordered; that stretch reads MSDLFRMEER…ARRYRQRSGE (64 aa). An Isoglutamyl lysine isopeptide (Glu-Lys) (interchain with K-? in acceptor proteins) cross-link involves residue glutamate 64.

Belongs to the ubiquitin-like protein UBact family.

May function as a protein modifier covalently attached to lysine residues of substrate proteins. This may serve to target the modified proteins for degradation by proteasomes. The polypeptide is Prokaryotic ubiquitin-like protein UBact (Chthonomonas calidirosea (strain DSM 23976 / ICMP 18418 / T49)).